The chain runs to 351 residues: Lipopolysaccharide core biosynthesis mannosyltransferase LpsB (351 aa).

This sequence belongs to the glycosyltransferase group 1 family. Glycosyltransferase 4 subfamily.

Its pathway is bacterial outer membrane biogenesis; LPS core biosynthesis. Acts at transfer of mannose group to a 3-deoxy-D-mono octulonic acid (KDO) via an alpha-1,5 linkage. The polypeptide is Lipopolysaccharide core biosynthesis mannosyltransferase LpsB (lpsB) (Rhizobium meliloti (strain 1021) (Ensifer meliloti)).